A 550-amino-acid polypeptide reads, in one-letter code: Hydroxylamine reductase (550 aa).

The [2Fe-2S] cluster site is built by C3, C6, C18, and C25. Hybrid [4Fe-2O-2S] cluster-binding residues include H249, E273, C317, C405, C433, C458, E492, and K494. Cysteine persulfide is present on C405.

Belongs to the HCP family. [2Fe-2S] cluster serves as cofactor. The cofactor is hybrid [4Fe-2O-2S] cluster.

Its subcellular location is the cytoplasm. The enzyme catalyses A + NH4(+) + H2O = hydroxylamine + AH2 + H(+). Catalyzes the reduction of hydroxylamine to form NH(3) and H(2)O. The polypeptide is Hydroxylamine reductase (Proteus mirabilis (strain HI4320)).